A 578-amino-acid polypeptide reads, in one-letter code: CTP synthase 2 (578 aa).

Residues 300 to 553 (SIALVGKYTK…MLAASGKLNT (254 aa)) enclose the Glutamine amidotransferase type-1 domain. Active-site for GATase activity residues include cysteine 399, histidine 526, and glutamate 528.

It belongs to the CTP synthase family.

The catalysed reaction is UTP + L-glutamine + ATP + H2O = CTP + L-glutamate + ADP + phosphate + 2 H(+). Its pathway is pyrimidine metabolism; CTP biosynthesis via de novo pathway; CTP from UDP: step 2/2. In terms of biological role, catalyzes the ATP-dependent amination of UTP to CTP with either L-glutamine or ammonia as the source of nitrogen. Constitutes the rate-limiting enzyme in the synthesis of cytosine nucleotides. The polypeptide is CTP synthase 2 (ctps2) (Xenopus laevis (African clawed frog)).